The primary structure comprises 89 residues: Cell division protein ZapA (89 aa).

This sequence belongs to the ZapA family. Type 2 subfamily. Homodimer. Interacts with FtsZ.

The protein localises to the cytoplasm. Functionally, activator of cell division through the inhibition of FtsZ GTPase activity, therefore promoting FtsZ assembly into bundles of protofilaments necessary for the formation of the division Z ring. It is recruited early at mid-cell but it is not essential for cell division. The sequence is that of Cell division protein ZapA from Bacillus thuringiensis (strain Al Hakam).